We begin with the raw amino-acid sequence, 895 residues long: Ras and Rab interactor 2 (895 aa).

The region spanning 97-190 (WLQLSLSEEE…VLPFTLKLPY (94 aa)) is the SH2 domain. The tract at residues 284 to 361 (LSGGLKRPST…KPTPIPPPRL (78 aa)) is disordered. The span at 306-315 (SPPPRPPPPA) shows a compositional bias: pro residues. The span at 328–338 (TETQTSMPETV) shows a compositional bias: polar residues. Ser366 carries the post-translational modification Phosphoserine. 2 disordered regions span residues 373–442 (GAKT…SDSL) and 460–481 (SLED…KSKK). Low complexity predominate over residues 430-441 (SDMSISTSSSDS). Phosphoserine is present on Ser501. Phosphothreonine is present on Thr509. Residues 618-757 (DGSWKQLKEN…IKNFQEEQAA (140 aa)) enclose the VPS9 domain. A Ras-associating domain is found at 787-878 (FQNYLRVAFQ…FHFVYKRIKN (92 aa)).

The protein belongs to the RIN (Ras interaction/interference) family. Homotetramer; probably composed of anti-parallel linkage of two parallel dimers. Interacts with Ras. Interacts with RAB5B, with a much higher affinity for GTP-bound activated RAB5B. Does not interact with other members of the Rab family. As to expression, widely expressed. Expressed in heart, kidney, lung placenta. Expressed at low level in skeletal muscle, spleen and peripheral blood.

It is found in the cytoplasm. Its function is as follows. Ras effector protein. May function as an upstream activator and/or downstream effector for RAB5B in endocytic pathway. May function as a guanine nucleotide exchange (GEF) of RAB5B, required for activating the RAB5 proteins by exchanging bound GDP for free GTP. In Homo sapiens (Human), this protein is Ras and Rab interactor 2 (RIN2).